The following is a 114-amino-acid chain: Large ribosomal subunit protein uL22 (114 aa).

The protein belongs to the universal ribosomal protein uL22 family. As to quaternary structure, part of the 50S ribosomal subunit.

In terms of biological role, this protein binds specifically to 23S rRNA; its binding is stimulated by other ribosomal proteins, e.g. L4, L17, and L20. It is important during the early stages of 50S assembly. It makes multiple contacts with different domains of the 23S rRNA in the assembled 50S subunit and ribosome. Functionally, the globular domain of the protein is located near the polypeptide exit tunnel on the outside of the subunit, while an extended beta-hairpin is found that lines the wall of the exit tunnel in the center of the 70S ribosome. In Myxococcus xanthus (strain DK1622), this protein is Large ribosomal subunit protein uL22.